Reading from the N-terminus, the 93-residue chain is Small ribosomal subunit protein uS19 (93 aa).

The protein belongs to the universal ribosomal protein uS19 family.

Its function is as follows. Protein S19 forms a complex with S13 that binds strongly to the 16S ribosomal RNA. This chain is Small ribosomal subunit protein uS19, found in Arthrobacter sp. (strain FB24).